Reading from the N-terminus, the 321-residue chain is Lipoyl synthase (321 aa).

[4Fe-4S] cluster-binding residues include cysteine 68, cysteine 73, cysteine 79, cysteine 94, cysteine 98, cysteine 101, and serine 308. In terms of domain architecture, Radical SAM core spans 80–297; it reads FNHGTATFMI…KVLADELGFT (218 aa).

Belongs to the radical SAM superfamily. Lipoyl synthase family. It depends on [4Fe-4S] cluster as a cofactor.

It localises to the cytoplasm. It carries out the reaction [[Fe-S] cluster scaffold protein carrying a second [4Fe-4S](2+) cluster] + N(6)-octanoyl-L-lysyl-[protein] + 2 oxidized [2Fe-2S]-[ferredoxin] + 2 S-adenosyl-L-methionine + 4 H(+) = [[Fe-S] cluster scaffold protein] + N(6)-[(R)-dihydrolipoyl]-L-lysyl-[protein] + 4 Fe(3+) + 2 hydrogen sulfide + 2 5'-deoxyadenosine + 2 L-methionine + 2 reduced [2Fe-2S]-[ferredoxin]. It functions in the pathway protein modification; protein lipoylation via endogenous pathway; protein N(6)-(lipoyl)lysine from octanoyl-[acyl-carrier-protein]: step 2/2. Catalyzes the radical-mediated insertion of two sulfur atoms into the C-6 and C-8 positions of the octanoyl moiety bound to the lipoyl domains of lipoate-dependent enzymes, thereby converting the octanoylated domains into lipoylated derivatives. This Shewanella denitrificans (strain OS217 / ATCC BAA-1090 / DSM 15013) protein is Lipoyl synthase.